We begin with the raw amino-acid sequence, 570 residues long: Formate--tetrahydrofolate ligase (570 aa).

ATP is bound at residue 65–72 (TPFGEGKT).

Belongs to the formate--tetrahydrofolate ligase family.

The catalysed reaction is (6S)-5,6,7,8-tetrahydrofolate + formate + ATP = (6R)-10-formyltetrahydrofolate + ADP + phosphate. It functions in the pathway one-carbon metabolism; tetrahydrofolate interconversion. The chain is Formate--tetrahydrofolate ligase from Shewanella woodyi (strain ATCC 51908 / MS32).